Here is a 354-residue protein sequence, read N- to C-terminus: Holliday junction branch migration complex subunit RuvB (354 aa).

Residues 4 to 191 (TDKLAAPARV…FGIVARLEFY (188 aa)) are large ATPase domain (RuvB-L). ATP contacts are provided by residues L30, R31, G72, K75, T76, T77, 138–140 (EDY), R181, Y191, and R228. T76 provides a ligand contact to Mg(2+). Positions 192-262 (TAEELARIVT…MADAALAMLD (71 aa)) are small ATPAse domain (RuvB-S). The segment at 265–354 (RVGFDLMDRK…GDAGELFGDA (90 aa)) is head domain (RuvB-H). DNA contacts are provided by R301, R320, and R325.

Belongs to the RuvB family. As to quaternary structure, homohexamer. Forms an RuvA(8)-RuvB(12)-Holliday junction (HJ) complex. HJ DNA is sandwiched between 2 RuvA tetramers; dsDNA enters through RuvA and exits via RuvB. An RuvB hexamer assembles on each DNA strand where it exits the tetramer. Each RuvB hexamer is contacted by two RuvA subunits (via domain III) on 2 adjacent RuvB subunits; this complex drives branch migration. In the full resolvosome a probable DNA-RuvA(4)-RuvB(12)-RuvC(2) complex forms which resolves the HJ.

It is found in the cytoplasm. The catalysed reaction is ATP + H2O = ADP + phosphate + H(+). Functionally, the RuvA-RuvB-RuvC complex processes Holliday junction (HJ) DNA during genetic recombination and DNA repair, while the RuvA-RuvB complex plays an important role in the rescue of blocked DNA replication forks via replication fork reversal (RFR). RuvA specifically binds to HJ cruciform DNA, conferring on it an open structure. The RuvB hexamer acts as an ATP-dependent pump, pulling dsDNA into and through the RuvAB complex. RuvB forms 2 homohexamers on either side of HJ DNA bound by 1 or 2 RuvA tetramers; 4 subunits per hexamer contact DNA at a time. Coordinated motions by a converter formed by DNA-disengaged RuvB subunits stimulates ATP hydrolysis and nucleotide exchange. Immobilization of the converter enables RuvB to convert the ATP-contained energy into a lever motion, pulling 2 nucleotides of DNA out of the RuvA tetramer per ATP hydrolyzed, thus driving DNA branch migration. The RuvB motors rotate together with the DNA substrate, which together with the progressing nucleotide cycle form the mechanistic basis for DNA recombination by continuous HJ branch migration. Branch migration allows RuvC to scan DNA until it finds its consensus sequence, where it cleaves and resolves cruciform DNA. In Cupriavidus taiwanensis (strain DSM 17343 / BCRC 17206 / CCUG 44338 / CIP 107171 / LMG 19424 / R1) (Ralstonia taiwanensis (strain LMG 19424)), this protein is Holliday junction branch migration complex subunit RuvB.